Here is a 353-residue protein sequence, read N- to C-terminus: MKIVKQDKKEGIVTLVPETLDDLWHLSHIVEVGDSVSSKTTRRIQDNTGDKLRSDRGVKKTFTLRIDVENITFHIFTGKLRLTGVITKGPEDLIPLGSHHTVEVKLNTPITIKKEKWANWALKRLNQAIEASKKLAAIIVLLEDDTATLGLMRQFGIEYYGPIKGSVSGKRIVDKNRSKAIAQFYEKVIESVNKFHDIQNIVVAGPGFVKNDFYDYIKNKHKDLADKAIIESTGSGGRVGIHEVLKKGTVEKLTVENRVASEMVAINNLLEEIGKNSSKVAYGEKETVKAINLGAVKQLLVLDSAVAINDMGNLMDMVENMNGEVMVISSQHEGGEQLKGLGSMAAILRYEIA.

This sequence belongs to the eukaryotic release factor 1 family. Pelota subfamily. Monomer. Requires a divalent metal cation as cofactor.

The protein localises to the cytoplasm. May function in recognizing stalled ribosomes, interact with stem-loop structures in stalled mRNA molecules, and effect endonucleolytic cleavage of the mRNA. May play a role in the release non-functional ribosomes and degradation of damaged mRNAs. Has endoribonuclease activity. This is Protein pelota homolog from Methanobrevibacter smithii (strain ATCC 35061 / DSM 861 / OCM 144 / PS).